The following is a 422-amino-acid chain: Platelet-activating factor acetylhydrolase (422 aa).

An N-terminal signal peptide occupies residues methionine 1 to serine 21. The active-site Nucleophile is serine 266. The Charge relay system role is filled by aspartate 289. A glycan (N-linked (GlcNAc...) asparagine) is linked at asparagine 331. Histidine 345 functions as the Charge relay system in the catalytic mechanism.

The protein belongs to the AB hydrolase superfamily. Lipase family. Plasma.

The protein localises to the secreted. It localises to the extracellular space. It carries out the reaction a 1-O-alkyl-2-acetyl-sn-glycero-3-phosphocholine + H2O = a 1-O-alkyl-sn-glycero-3-phosphocholine + acetate + H(+). Its function is as follows. Modulates the action of platelet-activating factor (PAF) by hydrolyzing the sn-2 ester bond to yield the biologically inactive lyso-PAF. Has a specificity for substrates with a short residue at the sn-2 position. It is inactive against long-chain phospholipids. This Gallus gallus (Chicken) protein is Platelet-activating factor acetylhydrolase (PLA2G7).